The sequence spans 393 residues: Cysteine protease ATG4B (393 aa).

M1 carries the post-translational modification N-acetylmethionine. A Phosphoserine modification is found at S34. C74 (nucleophile) is an active-site residue. C189 is subject to S-nitrosocysteine. Catalysis depends on residues D278 and H280. S-nitrosocysteine occurs at positions 292 and 301. C292 and C361 are joined by a disulfide. A phosphoserine mark is found at S316 and S383. An LIR motif is present at residues 388–391 (FEIL). At S392 the chain carries Phosphoserine.

Belongs to the peptidase C54 family. Interacts with PFKP; promoting phosphorylation of ATG4B at Ser-34. Interacts with GBP7. Post-translationally, phosphorylation at Ser-383 and Ser-392 promotes autophagy by increasing protein delipidation activity without affecting proteolytic activation of ATG8 proteins. Phosphorylation at Ser-316 by ULK1 inhibits autophagy by decreasing both proteolytic activation and delipidation activities. Phosphorylation at Ser-316 is dephosphorylated by protein phosphatase 2A (PP2A). Phosphorylation at Ser-34 by AKT2 promotes its hydrolase activity, leading to increased proteolytic activation and delipidation of ATG8 family proteins. Phosphorylation at Ser-34 by AKT1 promotes mitochondrial localization and inhibition of the F1F0-ATP synthase activity, leading to elevation of mitochondrial reactive oxygen species (ROS). In terms of processing, ubiquitinated by RNF5, leading to its degradation by the proteasome. S-nitrosylation at Cys-189 and Cys-292 in response to high glucose decreases both proteolytic activation and delipidation activities. Post-translationally, O-glycosylated by OGT, leading to increase protease activity, thereby promoting the proteolytic activation of ATG8 family proteins. In terms of processing, forms reversible intrachain disulfide bonds in response to oxidative stress. Forms interchain disulfide bonds, leading to formation of homooligomers in response to oxidation.

Its subcellular location is the cytoplasm. It is found in the cytosol. It localises to the cytoplasmic vesicle. The protein localises to the autophagosome. The protein resides in the endoplasmic reticulum. Its subcellular location is the mitochondrion. It catalyses the reaction [protein]-C-terminal L-amino acid-glycyl-phosphatidylethanolamide + H2O = [protein]-C-terminal L-amino acid-glycine + a 1,2-diacyl-sn-glycero-3-phosphoethanolamine. It carries out the reaction [protein]-C-terminal L-amino acid-glycyl-phosphatidylserine + H2O = [protein]-C-terminal L-amino acid-glycine + a 1,2-diacyl-sn-glycero-3-phospho-L-serine. Inhibited by N-ethylmaleimide. Redox-regulated during autophagy since reducing conditions activate ATG4A whereas an oxidizing environment such as the presence of H(2)O(2) inhibits its activity. The cysteine protease activity compounds is inhibited by styrylquinoline compounds 4-28 and LV-320. In terms of biological role, cysteine protease that plays a key role in autophagy by mediating both proteolytic activation and delipidation of ATG8 family proteins. Required for canonical autophagy (macroautophagy), non-canonical autophagy as well as for mitophagy. The protease activity is required for proteolytic activation of ATG8 family proteins: cleaves the C-terminal amino acid of ATG8 proteins MAP1LC3A, MAP1LC3B, MAP1LC3C, GABARAPL1, GABARAPL2 and GABARAP, to reveal a C-terminal glycine. Exposure of the glycine at the C-terminus is essential for ATG8 proteins conjugation to phosphatidylethanolamine (PE) and insertion to membranes, which is necessary for autophagy. Protease activity is also required to counteract formation of high-molecular weight conjugates of ATG8 proteins (ATG8ylation): acts as a deubiquitinating-like enzyme that removes ATG8 conjugated to other proteins, such as ATG3. In addition to the protease activity, also mediates delipidation of ATG8 family proteins. Catalyzes delipidation of PE-conjugated forms of ATG8 proteins during macroautophagy. Also involved in non-canonical autophagy, a parallel pathway involving conjugation of ATG8 proteins to single membranes at endolysosomal compartments, by catalyzing delipidation of ATG8 proteins conjugated to phosphatidylserine (PS). Compared to other members of the family (ATG4A, ATG4C or ATG4C), constitutes the major protein for proteolytic activation of ATG8 proteins, while it displays weaker delipidation activity than other ATG4 paralogs. Involved in phagophore growth during mitophagy independently of its protease activity and of ATG8 proteins: acts by regulating ATG9A trafficking to mitochondria and promoting phagophore-endoplasmic reticulum contacts during the lipid transfer phase of mitophagy. (Microbial infection) Mediates cleavage of an ATG8 protein homolog coded in the genome of cytopathogenic bovine viral diarrhea virus (BVDV). In Bos taurus (Bovine), this protein is Cysteine protease ATG4B (ATG4B).